The sequence spans 211 residues: Ribonuclease MRP protein subunit rmp1 (211 aa).

The helical transmembrane segment at 73-93 threads the bilayer; it reads PALGLVLLGILARVWFVMGGI. Ser-156 is modified (phosphoserine). The segment at 178–211 is disordered; the sequence is SQGTKRKSKNSNSTVKKKKKRARKGRDEIDDIFG. The span at 181-201 shows a compositional bias: basic residues; it reads TKRKSKNSNSTVKKKKKRARK.

In terms of assembly, component of RNase MRP complex which consists of an RNA moiety and at least 10 protein subunits.

The protein localises to the membrane. It is found in the nucleus. Its subcellular location is the nucleolus. In terms of biological role, functions as part of ribonuclease MRP (RNase MRP), which is involved in rRNA processing in mitochondria. This Schizosaccharomyces pombe (strain 972 / ATCC 24843) (Fission yeast) protein is Ribonuclease MRP protein subunit rmp1.